Reading from the N-terminus, the 849-residue chain is Dopamine receptor 2 (849 aa).

Over 1–39 (MEAGETWNVSLEWPPPSLDLSTITQTPSTIVGSGIPLNY) the chain is Extracellular. Residue N8 is glycosylated (N-linked (GlcNAc...) asparagine). A helical transmembrane segment spans residues 40 to 60 (AGLSLIVIPLITLLGNLLVII). Residues 61-70 (SVLRYRALQS) lie on the Cytoplasmic side of the membrane. A helical transmembrane segment spans residues 71–91 (AINFLILGLAVADLLVAIIVM). Residues 92–112 (PYAVYVYVTNGDWYLGNLMCD) are Extracellular-facing. C111 and C190 are joined by a disulfide. Residues 113–133 (IYMASDVCCSTASILLLAVIS) form a helical membrane-spanning segment. Residues 134-155 (FDRYRAVSLPIQYSRQSQNVKR) are Cytoplasmic-facing. A helical membrane pass occupies residues 156 to 176 (VWTLIAVIWLVSLTLASPMVF). Topologically, residues 177–203 (GVNVRPPDANPYECRFYNAEFSILSSM) are extracellular. Residues 183-849 (PDANPYECRF…HHFSNKQAHV (667 aa)) form a required for the interaction with gpa-14 region. Residues 204 to 224 (ISFVIPCFLVLFVYIRIIIAL) form a helical membrane-spanning segment. The Cytoplasmic segment spans residues 225 to 759 (KKREKAAKMR…QRKEKRATKT (535 aa)). The tract at residues 450-515 (RRSSYADDSQ…NNSRTASITN (66 aa)) is disordered. Residues 457-470 (DSQPTSSQTSSGDG) are compositionally biased toward low complexity. Positions 477–498 (GQKRFRNLSRNYSTKHHRKVVK) are enriched in basic residues. Over residues 501–515 (RGNSRNNSRTASITN) the composition is skewed to polar residues. A helical membrane pass occupies residues 760–780 (LGVVVGVFLVCWVPFFVINIL). Residues 781-798 (NAVCILLNKDSCQVGYDL) lie on the Extracellular side of the membrane. The chain crosses the membrane as a helical span at residues 799–819 (FFYCTWIGYMNSFMNPIIYTI). The Cytoplasmic segment spans residues 820–849 (FNTEFRRAFKSIIFGRNSTRHHFSNKQAHV).

The protein belongs to the G-protein coupled receptor 1 family. As to quaternary structure, interacts (via C-terminus) with the G-alpha protein gpa-14; the interaction is direct. As to expression, expressed in all dopaminergic neurons. Expressed in neurons around the nerve ring and the posterior side of the body including PDE neurons. In hermaphrodites, expressed in the head and tail ganglia including in the RIA interneuron pair, and in a subset of sublateral interneurons and the PDA neuron in the tail. Expressed in cholinergic SIA neurons. Also expressed in the male tail. In males, expressed in the dorsal spicule protractor, ventral spicule protractor, dorsal spicule retractor and ventral spicule retractor muscles and the sensory post-cloacal sensilla B (PCB) neuron. In males, expressed in the sensory hook neurons HOA.

The protein localises to the cell membrane. Its function is as follows. G-protein coupled receptor which binds to the neurotransmitter dopamine with high affinity leading to the activation of an associated G-protein and downstream signaling pathways. Couples to G-proteins to inhibit adenylate cyclase (AC) activity and cAMP production. Inhibits synaptic vesicle fusion to negatively regulate the release of dopamine at dopaminergic neuron synapses. Antagonizes octopamine signaling in response to food by promoting the dopamine-mediated suppression of crh-1/CREB1 transcription factor activation in cholinergic SIA neurons. This is most likely in association with the G(o)-alpha G-protein subunit goa-1. In association with the G-alpha protein gpa-14, modulates two types of learning behavior: touch habituation and chemosensory associative conditioning. May act partly via tsp-17 to negatively regulate dopamine reuptake transporter dat-1 activity. Plays a role in behavioral plasticity and regulates the decision-making process when conflicting alternatives are present. Promotes male mating behavior by antagonizing acetylcholine signaling to control the protrusions of copulatory spicules from the tail of males during hermaphrodite vulval location. Modulates unc-7 activity at gap junctions to promote inhibitory neuronal signaling transduction between chemosensory and mechanosensory neurons, and thus ensures spicule insertion attempts are confined to the hermaphrodite vulva during copulation. G-protein coupled receptor which binds to the neurotransmitter dopamine with high affinity leading to the activation of an associated G-protein and downstream signaling pathways. Couples to G-proteins to inhibit adenylate cyclase (AC) activity and cAMP production. This is Dopamine receptor 2 from Caenorhabditis elegans.